Reading from the N-terminus, the 348-residue chain is Serpentine receptor class alpha-29 (348 aa).

The next 6 membrane-spanning stretches (helical) occupy residues 28 to 48 (FILM…QTLW), 108 to 130 (FLYY…DRLF), 145 to 165 (GFIV…FWTF), 193 to 213 (INDS…FLYI), 246 to 266 (CIII…PSIF), and 280 to 300 (LILA…LIVI).

This sequence belongs to the nematode receptor-like protein sra family.

It localises to the membrane. This chain is Serpentine receptor class alpha-29 (sra-29), found in Caenorhabditis elegans.